The sequence spans 1434 residues: Inositol hexakisphosphate and diphosphoinositol-pentakisphosphate kinase 1 (1434 aa).

Position 66–67 (66–67 (KK)) interacts with substrate. ATP is bound by residues arginine 147, lysine 200, histidine 207, arginine 226, 250-253 (EEFM), and 259-261 (DVK). 226 to 227 (RK) is a substrate binding site. Lysine 261 and arginine 275 together coordinate substrate. Residues serine 277, aspartate 322, and 334–336 (DVN) each bind ATP. Residue 339-342 (SFVK) participates in substrate binding. Residues 384–455 (PTTSGTMMEL…VLDITRLLLA (72 aa)) are polyphosphoinositide-binding domain. The interval 916–1017 (EGSAPAGCGF…PTEMKQSGLG (102 aa)) is disordered. Phosphoserine occurs at positions 941 and 984. Over residues 1002–1017 (FSSSRPPTEMKQSGLG) the composition is skewed to polar residues. Residues serine 1034, serine 1070, serine 1142, and serine 1149 each carry the phosphoserine modification. Disordered stretches follow at residues 1133-1193 (NHQA…GFSD), 1228-1251 (ESTQSPQEPPVEISPPGSQDDTEV), and 1396-1434 (TDNPSQELSEETDLQAQEVSEEIDQEPEVVDELSNEDIS). The segment covering 1165–1183 (SSGPSSTVSSAGPSSPTTV) has biased composition (low complexity). Residues 1403-1434 (LSEETDLQAQEVSEEIDQEPEVVDELSNEDIS) are compositionally biased toward acidic residues.

This sequence belongs to the histidine acid phosphatase family. VIP1 subfamily.

It localises to the cytoplasm. The protein localises to the cytosol. Its subcellular location is the cell membrane. It catalyses the reaction 1D-myo-inositol hexakisphosphate + ATP = 1-diphospho-1D-myo-inositol 2,3,4,5,6-pentakisphosphate + ADP. It carries out the reaction 5-diphospho-1D-myo-inositol 1,2,3,4,6-pentakisphosphate + ATP + H(+) = 1,5-bis(diphospho)-1D-myo-inositol 2,3,4,6-tetrakisphosphate + ADP. Functionally, bifunctional inositol kinase that acts in concert with the IP6K kinases IP6K1, IP6K2 and IP6K3 to synthesize the diphosphate group-containing inositol pyrophosphates diphosphoinositol pentakisphosphate, PP-InsP5, and bis-diphosphoinositol tetrakisphosphate, (PP)2-InsP4. PP-InsP5 and (PP)2-InsP4, also respectively called InsP7 and InsP8, regulate a variety of cellular processes, including apoptosis, vesicle trafficking, cytoskeletal dynamics, exocytosis, insulin signaling and neutrophil activation. Phosphorylates inositol hexakisphosphate (InsP6) at position 1 to produce PP-InsP5 which is in turn phosphorylated by IP6Ks to produce (PP)2-InsP4. Alternatively, phosphorylates PP-InsP5 at position 1, produced by IP6Ks from InsP6, to produce (PP)2-InsP4. Activated when cells are exposed to hyperosmotic stress. This chain is Inositol hexakisphosphate and diphosphoinositol-pentakisphosphate kinase 1, found in Rattus norvegicus (Rat).